We begin with the raw amino-acid sequence, 130 residues long: Phosphoribosyl-AMP cyclohydrolase (130 aa).

Asp77 provides a ligand contact to Mg(2+). Position 78 (Cys78) interacts with Zn(2+). Residues Asp79 and Asp81 each coordinate Mg(2+). Residues Cys95 and Cys102 each coordinate Zn(2+).

This sequence belongs to the PRA-CH family. Homodimer. Mg(2+) is required as a cofactor. It depends on Zn(2+) as a cofactor.

It localises to the cytoplasm. It catalyses the reaction 1-(5-phospho-beta-D-ribosyl)-5'-AMP + H2O = 1-(5-phospho-beta-D-ribosyl)-5-[(5-phospho-beta-D-ribosylamino)methylideneamino]imidazole-4-carboxamide. It functions in the pathway amino-acid biosynthesis; L-histidine biosynthesis; L-histidine from 5-phospho-alpha-D-ribose 1-diphosphate: step 3/9. Its function is as follows. Catalyzes the hydrolysis of the adenine ring of phosphoribosyl-AMP. The polypeptide is Phosphoribosyl-AMP cyclohydrolase (Pseudomonas syringae pv. tomato (strain ATCC BAA-871 / DC3000)).